We begin with the raw amino-acid sequence, 101 residues long: uncharacterized protein (101 aa).

The first 27 residues, 1–27, serve as a signal peptide directing secretion; that stretch reads MQLTGSIYPWFTAYALLKSTLMELINS. A run of 2 helical transmembrane segments spans residues 42–64 and 79–98; these read LVPY…AISF and TFVF…NTFL.

It is found in the cytoplasm. The protein resides in the nucleus membrane. This is an uncharacterized protein from Schizosaccharomyces pombe (strain 972 / ATCC 24843) (Fission yeast).